We begin with the raw amino-acid sequence, 78 residues long: Large ribosomal subunit protein bL28 (78 aa).

Positions 1–21 (MSRVCQVTGKSPITGNNVSHA) are disordered. The segment covering 8–21 (TGKSPITGNNVSHA) has biased composition (polar residues).

The protein belongs to the bacterial ribosomal protein bL28 family.

The chain is Large ribosomal subunit protein bL28 from Hahella chejuensis (strain KCTC 2396).